We begin with the raw amino-acid sequence, 431 residues long: Histidine--tRNA ligase (431 aa).

It belongs to the class-II aminoacyl-tRNA synthetase family. As to quaternary structure, homodimer.

It localises to the cytoplasm. The enzyme catalyses tRNA(His) + L-histidine + ATP = L-histidyl-tRNA(His) + AMP + diphosphate + H(+). In Limosilactobacillus fermentum (strain NBRC 3956 / LMG 18251) (Lactobacillus fermentum), this protein is Histidine--tRNA ligase.